The chain runs to 277 residues: MAVKGFRPTTPTRREMTMCTFEEITTSTPEKSLLVSLKKSGGRNANGKITVRHIGGGAKRKYRIIDFKRNKDNIPAKVVSIEYDPNRTAFIALVVYADGEKRYIIAPVGLKVGDTVVSGPESDIKVGNCLPIRNIPVGTVIHNIELAAGKGAQLVRSAGNSAQLMAKEGDYSQVRLPSGEVRYIRVECRATIGVVSNQTSEIVNIGKAGRKRHMGVRPTVRGSVMNPNDHPHGGGEGRSPIGHPSPRTPWGKPALGYKTRKNKKYSDRFIVKRRHDK.

The interval 219 to 277 (TVRGSVMNPNDHPHGGGEGRSPIGHPSPRTPWGKPALGYKTRKNKKYSDRFIVKRRHDK) is disordered.

The protein belongs to the universal ribosomal protein uL2 family. In terms of assembly, part of the 50S ribosomal subunit. Forms a bridge to the 30S subunit in the 70S ribosome.

Its function is as follows. One of the primary rRNA binding proteins. Required for association of the 30S and 50S subunits to form the 70S ribosome, for tRNA binding and peptide bond formation. It has been suggested to have peptidyltransferase activity; this is somewhat controversial. Makes several contacts with the 16S rRNA in the 70S ribosome. The chain is Large ribosomal subunit protein uL2 from Clostridium botulinum (strain ATCC 19397 / Type A).